A 416-amino-acid chain; its full sequence is MKQLKMVLIVGDGMGDRLVPSLGNKTPLEVASTPNLDEAARRGQAGLMDVIAPGVPPGSDTAHLALFGLDPFEWYEGRGPFEALGVGAEVGPGDVALRGNFATVEERGGRLVVVDRRAGRYLPEAEELVKALNEELSEVEGVKVRFYHATEHRVAVVLKGEGLSDEVSDTDPHEVGKPVQEARPLRDTPEAKKTARVINEITFRSYQILKDHPANKRRVEKGLPPANIVLLRGAGMMRKKLPTLQERYGIKAAAVGATALVLGVARAVGMDVIVPPGATGGVNTDYKSKARTAVELLKDYDMVFVHIKGTDAASHDGDVENKIKMIEALDYVLGYLLDYYDGEAVFAVTPDHATPVTVKEHTGDPVPVLLYAPTLIPDEAVEYNERAVRKGILRIRGRDLINLMLNYSNRAKKFGA.

Belongs to the BPG-independent phosphoglycerate mutase family. A-PGAM subfamily.

The catalysed reaction is (2R)-2-phosphoglycerate = (2R)-3-phosphoglycerate. It functions in the pathway carbohydrate degradation; glycolysis; pyruvate from D-glyceraldehyde 3-phosphate: step 3/5. Functionally, catalyzes the interconversion of 2-phosphoglycerate and 3-phosphoglycerate. This is 2,3-bisphosphoglycerate-independent phosphoglycerate mutase from Ignicoccus hospitalis (strain KIN4/I / DSM 18386 / JCM 14125).